The following is a 96-amino-acid chain: Co-chaperonin GroES (96 aa).

The protein belongs to the GroES chaperonin family. In terms of assembly, heptamer of 7 subunits arranged in a ring. Interacts with the chaperonin GroEL.

The protein localises to the cytoplasm. Functionally, together with the chaperonin GroEL, plays an essential role in assisting protein folding. The GroEL-GroES system forms a nano-cage that allows encapsulation of the non-native substrate proteins and provides a physical environment optimized to promote and accelerate protein folding. GroES binds to the apical surface of the GroEL ring, thereby capping the opening of the GroEL channel. The polypeptide is Co-chaperonin GroES (Alcanivorax borkumensis (strain ATCC 700651 / DSM 11573 / NCIMB 13689 / SK2)).